The sequence spans 492 residues: Trigger factor (492 aa).

The 86-residue stretch at Gly-169–Leu-254 folds into the PPIase FKBP-type domain. The tract at residues Leu-441–Glu-492 is disordered. A compositionally biased stretch (basic and acidic residues) spans Lys-463–Lys-479. Over residues Lys-480–Glu-492 the composition is skewed to basic residues.

Belongs to the FKBP-type PPIase family. Tig subfamily.

It is found in the cytoplasm. The enzyme catalyses [protein]-peptidylproline (omega=180) = [protein]-peptidylproline (omega=0). Involved in protein export. Acts as a chaperone by maintaining the newly synthesized protein in an open conformation. Functions as a peptidyl-prolyl cis-trans isomerase. The chain is Trigger factor from Mesorhizobium japonicum (strain LMG 29417 / CECT 9101 / MAFF 303099) (Mesorhizobium loti (strain MAFF 303099)).